We begin with the raw amino-acid sequence, 246 residues long: Protein phosphatase PhpP (246 aa).

The region spanning 2-240 (EISLLTDVGQ…DNITVALVSM (239 aa)) is the PPM-type phosphatase domain. Residues Asp-36, Gly-37, Asp-192, and Asp-231 each coordinate Mn(2+).

It belongs to the PP2C family. As to quaternary structure, interacts with the kinase domain of StkP. Mn(2+) is required as a cofactor.

The protein resides in the cytoplasm. It carries out the reaction O-phospho-L-seryl-[protein] + H2O = L-seryl-[protein] + phosphate. The catalysed reaction is O-phospho-L-threonyl-[protein] + H2O = L-threonyl-[protein] + phosphate. With respect to regulation, phosphatase activity is inhibited by NaF but not by okadaic acid. In terms of biological role, protein phosphatase able to dephosphorylate StkP-P and a phosphothreonine residue in a phosphopeptide synthetic substrate. PhpP and its cognate protein kinase StkP appear to constitute a functional signaling couple in vivo, PhpP's primary role probably being to control phosphorylation levels of StkP and of its targets (which include LocZ, DivIVA and KhpB (also called EloR/Jag)). PhpP thus performs an essential control of StkP activity. Overexpression confers an stkP deletion-like phenotype. In Streptococcus pneumoniae, this protein is Protein phosphatase PhpP (phpP).